A 452-amino-acid chain; its full sequence is Ribulose bisphosphate carboxylase large chain (452 aa).

Positions 1–2 (MS) are excised as a propeptide. Pro3 is subject to N-acetylproline. N6,N6,N6-trimethyllysine is present on Lys14. The substrate site is built by Asn123 and Thr173. Catalysis depends on Lys175, which acts as the Proton acceptor. A substrate-binding site is contributed by Lys177. 3 residues coordinate Mg(2+): Lys201, Asp203, and Glu204. Lys201 bears the N6-carboxylysine mark. The active-site Proton acceptor is the His294. 3 residues coordinate substrate: Arg295, Xaa327, and Ser379.

This sequence belongs to the RuBisCO large chain family. Type I subfamily. Heterohexadecamer of 8 large chains and 8 small chains; disulfide-linked. The disulfide link is formed within the large subunit homodimers. Mg(2+) is required as a cofactor. In terms of processing, the disulfide bond which can form in the large chain dimeric partners within the hexadecamer appears to be associated with oxidative stress and protein turnover.

The protein localises to the plastid. The protein resides in the chloroplast. It catalyses the reaction 2 (2R)-3-phosphoglycerate + 2 H(+) = D-ribulose 1,5-bisphosphate + CO2 + H2O. It carries out the reaction D-ribulose 1,5-bisphosphate + O2 = 2-phosphoglycolate + (2R)-3-phosphoglycerate + 2 H(+). RuBisCO catalyzes two reactions: the carboxylation of D-ribulose 1,5-bisphosphate, the primary event in carbon dioxide fixation, as well as the oxidative fragmentation of the pentose substrate in the photorespiration process. Both reactions occur simultaneously and in competition at the same active site. The chain is Ribulose bisphosphate carboxylase large chain from Salvadora persica (Toothbrush tree).